The chain runs to 39 residues: Contryphan-Cal1 (39 aa).

A signal peptide spans 1–20 (MTRTAVLLLTLLFLVAMAAS). An intrachain disulfide couples Cys29 to Cys35.

In terms of tissue distribution, expressed by the venom duct.

Its subcellular location is the secreted. Functionally, probable neurotoxin. This Californiconus californicus (California cone) protein is Contryphan-Cal1.